Reading from the N-terminus, the 249-residue chain is Aspartate/glutamate leucyltransferase (249 aa).

Belongs to the R-transferase family. Bpt subfamily.

It is found in the cytoplasm. The enzyme catalyses N-terminal L-glutamyl-[protein] + L-leucyl-tRNA(Leu) = N-terminal L-leucyl-L-glutamyl-[protein] + tRNA(Leu) + H(+). The catalysed reaction is N-terminal L-aspartyl-[protein] + L-leucyl-tRNA(Leu) = N-terminal L-leucyl-L-aspartyl-[protein] + tRNA(Leu) + H(+). Its function is as follows. Functions in the N-end rule pathway of protein degradation where it conjugates Leu from its aminoacyl-tRNA to the N-termini of proteins containing an N-terminal aspartate or glutamate. This chain is Aspartate/glutamate leucyltransferase, found in Brucella suis (strain ATCC 23445 / NCTC 10510).